Reading from the N-terminus, the 223-residue chain is Urease subunit alpha (223 aa).

A urease gamma region spans residues 1–101 (MHFTQQQLQR…LVTIHEPIAN (101 aa)). The segment at 102–223 (DDKIKAGEIF…LSKAKEKGFL (122 aa)) is urease beta.

It in the N-terminal section; belongs to the urease gamma subunit family. In the C-terminal section; belongs to the urease beta subunit family. Heterohexamer of 3 UreA (alpha) and 3 UreB (beta) subunits.

It localises to the cytoplasm. It carries out the reaction urea + 2 H2O + H(+) = hydrogencarbonate + 2 NH4(+). It participates in nitrogen metabolism; urea degradation; CO(2) and NH(3) from urea (urease route): step 1/1. The sequence is that of Urease subunit alpha from Campylobacter lari.